The following is a 505-amino-acid chain: SusD-like protein P2 (505 aa).

An N-terminal signal peptide occupies residues 1 to 17 (MKKYKITFIVLLLTLVG). C18 carries the N-palmitoyl cysteine lipid modification. A lipid anchor (S-diacylglycerol cysteine) is attached at C18.

Belongs to the SusD family.

The protein localises to the cell outer membrane. Polysaccharide-binding protein probably involved in ulvan degradation. Ulvan is the main polysaccharide component of the Ulvales (green seaweed) cell wall. It is composed of disaccharide building blocks comprising 3-sulfated rhamnose (Rha3S) linked to D-glucuronic acid (GlcA), L-iduronic acid (IduA), or D-xylose (Xyl). The SusD-like protein may mediate ulvan oligomer-binding before transport in the periplasm for further degradation. This is SusD-like protein P2 from Formosa agariphila (strain DSM 15362 / KCTC 12365 / LMG 23005 / KMM 3901 / M-2Alg 35-1).